Reading from the N-terminus, the 371-residue chain is tRNA (guanine(26)-N(2))-dimethyltransferase (371 aa).

Residues 4–368 (VEVTEGRTRF…APLPVLEKVV (365 aa)) form the Trm1 methyltransferase domain. Residues Arg-41, Arg-66, Asp-82, Asp-108, and Ala-109 each coordinate S-adenosyl-L-methionine. Zn(2+)-binding residues include Cys-237, Cys-240, Cys-256, and Cys-259.

Belongs to the class I-like SAM-binding methyltransferase superfamily. Trm1 family.

The enzyme catalyses guanosine(26) in tRNA + 2 S-adenosyl-L-methionine = N(2)-dimethylguanosine(26) in tRNA + 2 S-adenosyl-L-homocysteine + 2 H(+). In terms of biological role, dimethylates a single guanine residue at position 26 of a number of tRNAs using S-adenosyl-L-methionine as donor of the methyl groups. The sequence is that of tRNA (guanine(26)-N(2))-dimethyltransferase from Methanoculleus marisnigri (strain ATCC 35101 / DSM 1498 / JR1).